The sequence spans 517 residues: Cytochrome P450 78A5 (517 aa).

The helical transmembrane segment at 20–40 (AFASVSLIIATVAFLLSPGGL) threads the bilayer. Cys459 is a heme binding site.

The protein belongs to the cytochrome P450 family. Heme serves as cofactor. Expressed in the periphery of the shoot apical meristem and inflorescence meristem, on the adaxial sides of developing floral organs and in developing ovules in the region where the integuments emerge.

The protein localises to the membrane. In terms of biological role, plays a role in regulating directional growth at the meristem/organ boundary. Is required for the promotion of leaf and floral organ growth and for the prolongation of the plastochron. Promotes organ growth in a non-cell-autonomous manner and may generate a mobile growth signal distinct from the classical phytohormones that prevents premature arrest of proliferation, until the correct primordium size has been reached. Functions probably in association with CYP78A7 in regulating relative growth of the shoot apical meristem and plant organs. Is required locally in developing ovules to stimulates cell proliferation and promote seed growth. The protein is Cytochrome P450 78A5 (CYP78A5) of Arabidopsis thaliana (Mouse-ear cress).